A 494-amino-acid polypeptide reads, in one-letter code: Aspartyl/glutamyl-tRNA(Asn/Gln) amidotransferase subunit B (494 aa).

Belongs to the GatB/GatE family. GatB subfamily. Heterotrimer of A, B and C subunits.

It carries out the reaction L-glutamyl-tRNA(Gln) + L-glutamine + ATP + H2O = L-glutaminyl-tRNA(Gln) + L-glutamate + ADP + phosphate + H(+). The enzyme catalyses L-aspartyl-tRNA(Asn) + L-glutamine + ATP + H2O = L-asparaginyl-tRNA(Asn) + L-glutamate + ADP + phosphate + 2 H(+). Functionally, allows the formation of correctly charged Asn-tRNA(Asn) or Gln-tRNA(Gln) through the transamidation of misacylated Asp-tRNA(Asn) or Glu-tRNA(Gln) in organisms which lack either or both of asparaginyl-tRNA or glutaminyl-tRNA synthetases. The reaction takes place in the presence of glutamine and ATP through an activated phospho-Asp-tRNA(Asn) or phospho-Glu-tRNA(Gln). The chain is Aspartyl/glutamyl-tRNA(Asn/Gln) amidotransferase subunit B from Nitrobacter hamburgensis (strain DSM 10229 / NCIMB 13809 / X14).